The following is a 218-amino-acid chain: GTP cyclohydrolase 1 (218 aa).

Zn(2+)-binding residues include Cys109, His112, and Cys180.

This sequence belongs to the GTP cyclohydrolase I family. In terms of assembly, toroid-shaped homodecamer, composed of two pentamers of five dimers.

The catalysed reaction is GTP + H2O = 7,8-dihydroneopterin 3'-triphosphate + formate + H(+). It participates in cofactor biosynthesis; 7,8-dihydroneopterin triphosphate biosynthesis; 7,8-dihydroneopterin triphosphate from GTP: step 1/1. This chain is GTP cyclohydrolase 1, found in Aeromonas hydrophila subsp. hydrophila (strain ATCC 7966 / DSM 30187 / BCRC 13018 / CCUG 14551 / JCM 1027 / KCTC 2358 / NCIMB 9240 / NCTC 8049).